The sequence spans 554 residues: (E)-beta-caryophyllene synthase (554 aa).

Residues D313 and D317 each coordinate Mn(2+). The DDXXD motif signature appears at 313–317 (DDTYD). 2 homodimerization regions span residues 319–325 (YGTLDEL) and 391–427 (EAQW…LAVI). Mn(2+) is bound by residues D457 and E465.

This sequence belongs to the terpene synthase family. In terms of assembly, homodimer. Mn(2+) serves as cofactor. The cofactor is Mg(2+). As to expression, expressed in peltate glandular trichomes. Present at low levels in flowers, leaves and stems.

The enzyme catalyses (2E,6E)-farnesyl diphosphate = (-)-(E)-beta-caryophyllene + diphosphate. It catalyses the reaction (2E,6E)-farnesyl diphosphate = alpha-humulene + diphosphate. Its pathway is secondary metabolite biosynthesis; terpenoid biosynthesis. Involved in the biosynthesis of phenolic sesquiterpenes natural products. Sesquiterpene synthase converting (2E,6E)-farnesyl diphosphate (FPP) to (E)-beta-caryophyllene and alpha-humulene. This chain is (E)-beta-caryophyllene synthase, found in Origanum vulgare (Wild marjoram).